A 360-amino-acid chain; its full sequence is UDP-N-acetylglucosamine--N-acetylmuramyl-(pentapeptide) pyrophosphoryl-undecaprenol N-acetylglucosamine transferase (360 aa).

UDP-N-acetyl-alpha-D-glucosamine-binding positions include 15-17, N124, R165, S191, and Q285; that span reads TGG.

It belongs to the glycosyltransferase 28 family. MurG subfamily.

The protein localises to the cell inner membrane. The catalysed reaction is di-trans,octa-cis-undecaprenyl diphospho-N-acetyl-alpha-D-muramoyl-L-alanyl-D-glutamyl-meso-2,6-diaminopimeloyl-D-alanyl-D-alanine + UDP-N-acetyl-alpha-D-glucosamine = di-trans,octa-cis-undecaprenyl diphospho-[N-acetyl-alpha-D-glucosaminyl-(1-&gt;4)]-N-acetyl-alpha-D-muramoyl-L-alanyl-D-glutamyl-meso-2,6-diaminopimeloyl-D-alanyl-D-alanine + UDP + H(+). Its pathway is cell wall biogenesis; peptidoglycan biosynthesis. Its function is as follows. Cell wall formation. Catalyzes the transfer of a GlcNAc subunit on undecaprenyl-pyrophosphoryl-MurNAc-pentapeptide (lipid intermediate I) to form undecaprenyl-pyrophosphoryl-MurNAc-(pentapeptide)GlcNAc (lipid intermediate II). In Gloeothece citriformis (strain PCC 7424) (Cyanothece sp. (strain PCC 7424)), this protein is UDP-N-acetylglucosamine--N-acetylmuramyl-(pentapeptide) pyrophosphoryl-undecaprenol N-acetylglucosamine transferase.